Reading from the N-terminus, the 540-residue chain is Beta-secretase (540 aa).

Residues 1-31 form the signal peptide; that stretch reads MHFSLPTSRIVVVVPAAAICIVCVLIETCTA. One can recognise a Peptidase A1 domain in the interval 81–435; that stretch reads YYIEVDIGTP…DRENKRVGFA (355 aa). Catalysis depends on residues aspartate 99 and aspartate 302. Disulfide bonds link cysteine 222/cysteine 439, cysteine 291/cysteine 469, and cysteine 345/cysteine 397. A helical membrane pass occupies residues 483–503; sequence ITAYVLAAICLVCLIPVIVFA. At 504-540 the chain is on the cytoplasmic side; sequence LTHQINKRCKGRRGRGVVNHHRLDQEGLAENEPNSDP.

Belongs to the peptidase A1 family.

Its subcellular location is the membrane. In Strongylocentrotus purpuratus (Purple sea urchin), this protein is Beta-secretase.